A 383-amino-acid chain; its full sequence is Geranylgeranyl pyrophosphate synthase esdpD (383 aa).

Isopentenyl diphosphate-binding residues include Lys-88, Arg-91, and His-120. Residues Asp-150 and Asp-154 each coordinate Mg(2+). Arg-159 serves as a coordination point for dimethylallyl diphosphate. Position 160 (Arg-160) interacts with isopentenyl diphosphate. 3 residues coordinate dimethylallyl diphosphate: Lys-237, Thr-238, and Gln-271. Asp-274 provides a ligand contact to Mg(2+). Dimethylallyl diphosphate contacts are provided by Asn-278, Lys-288, and Lys-298.

Belongs to the FPP/GGPP synthase family. Mg(2+) serves as cofactor.

The enzyme catalyses isopentenyl diphosphate + dimethylallyl diphosphate = (2E)-geranyl diphosphate + diphosphate. It carries out the reaction isopentenyl diphosphate + (2E)-geranyl diphosphate = (2E,6E)-farnesyl diphosphate + diphosphate. The catalysed reaction is isopentenyl diphosphate + (2E,6E)-farnesyl diphosphate = (2E,6E,10E)-geranylgeranyl diphosphate + diphosphate. Its pathway is secondary metabolite biosynthesis; terpenoid biosynthesis. Its function is as follows. Geranylgeranyl pyrophosphate synthase; part of the cluster that mediates the biosynthesis of shearones, diterpenoid pyrones (DPs) which are structurally diverse meroterpenoids consisting of a diterpene linked by a pyrone, and which may exhibit a range of bioactivities. Within the pathway, esdpD takes part to the biosynthesis of the molecular scaffold by providing geranylgeranyl pyrophosphate (GGPP) to the prenyltransferase esdpC for C-3 geranylgeranylation of the alpha-pyrone. The molecular scaffold is commonly biosynthesized by a series of enzymes including the non-reducing polyketide synthase (NR-PKS) esdpA that generates an alpha-pyrone; the prenyltransferase esdpC that attaches a geranylgeranyl pyrophosphate (GGPP) produced by the GGPP synthase (GGPPS) esdpD onto the pyrone unit; the FAD-dependent monooxygenase esdpE that converts an olefin on the diterpene unit into an epoxide; and the terpene cyclase esdpB that catalyzes the cyclization reactions to give the molecular backbone shearone A. In the modification steps, esdpF oxidizes the hydroxy group to a ketone at C-3 and esdpG then attaches hydroxy groups at both C-11 and C-12. After that, esdpI hydroxylates at C-20 and esdpH hydroxylates at C-6'. The ether bridge is generated by nucleophilic attack of the hydroxy group at C-20 to the carbonyl carbon at C-3. EsdpH can also functions prior to esdpI. The different combinations of these modification enzymes lead to the production of diverse shearone derivatives, shearone I being the end product of the pathway. The alpha-ketoglutarate-dependent dioxygenase esdpJ seems not to be involved in this pathway. This Penicillium shearii (Eupenicillium shearii) protein is Geranylgeranyl pyrophosphate synthase esdpD.